Reading from the N-terminus, the 193-residue chain is Phosphoheptose isomerase (193 aa).

The 157-residue stretch at 37–193 (IAQSFKNEKK…LIIEKEMQKN (157 aa)) folds into the SIS domain. Substrate is bound at residue 52–54 (NGG). Residues His61 and Glu65 each coordinate Zn(2+). Substrate-binding positions include Glu65, 93 to 94 (ND), 119 to 121 (STS), Ser124, and Gln172. Residues Gln172 and His180 each contribute to the Zn(2+) site.

Belongs to the SIS family. GmhA subfamily. As to quaternary structure, homotetramer. Requires Zn(2+) as cofactor.

The protein localises to the cytoplasm. The catalysed reaction is 2 D-sedoheptulose 7-phosphate = D-glycero-alpha-D-manno-heptose 7-phosphate + D-glycero-beta-D-manno-heptose 7-phosphate. The protein operates within carbohydrate biosynthesis; D-glycero-D-manno-heptose 7-phosphate biosynthesis; D-glycero-alpha-D-manno-heptose 7-phosphate and D-glycero-beta-D-manno-heptose 7-phosphate from sedoheptulose 7-phosphate: step 1/1. Functionally, catalyzes the isomerization of sedoheptulose 7-phosphate in D-glycero-D-manno-heptose 7-phosphate. This chain is Phosphoheptose isomerase, found in Buchnera aphidicola subsp. Acyrthosiphon pisum (strain 5A).